A 70-amino-acid polypeptide reads, in one-letter code: NAD(P)H-quinone oxidoreductase subunit L (70 aa).

Transmembrane regions (helical) follow at residues 2-22 (IVPL…PVAL) and 39-59 (TFMY…SPFV).

The protein belongs to the complex I NdhL subunit family. As to quaternary structure, NDH-1 can be composed of about 15 different subunits; different subcomplexes with different compositions have been identified which probably have different functions.

It is found in the cellular thylakoid membrane. The catalysed reaction is a plastoquinone + NADH + (n+1) H(+)(in) = a plastoquinol + NAD(+) + n H(+)(out). It catalyses the reaction a plastoquinone + NADPH + (n+1) H(+)(in) = a plastoquinol + NADP(+) + n H(+)(out). Its function is as follows. NDH-1 shuttles electrons from an unknown electron donor, via FMN and iron-sulfur (Fe-S) centers, to quinones in the respiratory and/or the photosynthetic chain. The immediate electron acceptor for the enzyme in this species is believed to be plastoquinone. Couples the redox reaction to proton translocation, and thus conserves the redox energy in a proton gradient. Cyanobacterial NDH-1 also plays a role in inorganic carbon-concentration. In Trichormus variabilis (strain ATCC 29413 / PCC 7937) (Anabaena variabilis), this protein is NAD(P)H-quinone oxidoreductase subunit L.